The chain runs to 211 residues: Imidazole glycerol phosphate synthase subunit HisH (211 aa).

The 209-residue stretch at 3–211 folds into the Glutamine amidotransferase type-1 domain; that stretch reads VIAVIDYDMG…VSQIKAPVLV (209 aa). Cysteine 81 functions as the Nucleophile in the catalytic mechanism. Catalysis depends on residues histidine 186 and glutamate 188.

Heterodimer of HisH and HisF.

The protein localises to the cytoplasm. The enzyme catalyses 5-[(5-phospho-1-deoxy-D-ribulos-1-ylimino)methylamino]-1-(5-phospho-beta-D-ribosyl)imidazole-4-carboxamide + L-glutamine = D-erythro-1-(imidazol-4-yl)glycerol 3-phosphate + 5-amino-1-(5-phospho-beta-D-ribosyl)imidazole-4-carboxamide + L-glutamate + H(+). It catalyses the reaction L-glutamine + H2O = L-glutamate + NH4(+). It participates in amino-acid biosynthesis; L-histidine biosynthesis; L-histidine from 5-phospho-alpha-D-ribose 1-diphosphate: step 5/9. Functionally, IGPS catalyzes the conversion of PRFAR and glutamine to IGP, AICAR and glutamate. The HisH subunit catalyzes the hydrolysis of glutamine to glutamate and ammonia as part of the synthesis of IGP and AICAR. The resulting ammonia molecule is channeled to the active site of HisF. The polypeptide is Imidazole glycerol phosphate synthase subunit HisH (Cyanothece sp. (strain PCC 7425 / ATCC 29141)).